A 593-amino-acid polypeptide reads, in one-letter code: MAQISESVSPSTDLKSTESSITSNRHGNMWEDDRIQSLNSPYGAPAYQERSEKLIEEIKLLFLSDMDDSCNDSDRDLIKRLEIVDTVECLGIDRHFQPEIKLALDYVYRCWNERGIGEGSRDSLKKDLNATALGFRALRLHRYNVSSGVLENFRDDNGQFFCGSTVEEEGAEAYNKHVRCMLSLSRASNILFPGEKVMEEAKAFTTNYLKKVLAGREATHVDESLLGEVKYALEFPWHCSVQRWEARSFIEIFGQIDSELKSNLSKKMLELAKLDFNILQCTHQKELQIISRWFADSSIASLNFYRKCYVEFYFWMAAAISEPEFSGSRVAFTKIAILMTMLDDLYDTHGTLDQLKIFTEGVRRWDVSLVEGLPDFMKIAFEFWLKTSNELIAEAVKAQGQDMAAYIRKNAWERYLEAYLQDAEWIATGHVPTFDEYLNNGTPNTGMCVLNLIPLLLMGEHLPIDILEQIFLPSRFHHLIELASRLVDDARDFQAEKDHGDLSCIECYLKDHPESTVEDALNHVNGLLGNCLLEMNWKFLKKQDSVPLSCKKYSFHVLARSIQFMYNQGDGFSISNKVIKDQVQKVLIVPVPI.

Over residues Met-1–His-26 the composition is skewed to polar residues. Residues Met-1–Arg-34 are disordered. Mg(2+) contacts are provided by Asp-343, Asp-347, Asp-488, and Glu-496. The short motif at Asp-343 to Asp-347 is the DDXXD motif element.

Belongs to the terpene synthase family. Tpsd subfamily. Mg(2+) serves as cofactor. It depends on K(+) as a cofactor.

It localises to the cytoplasm. The catalysed reaction is (2E,6E)-farnesyl diphosphate = gamma-humulene + diphosphate. It catalyses the reaction (2E,6E)-farnesyl diphosphate = sibirene + diphosphate. It carries out the reaction (2E,6E)-farnesyl diphosphate = longifolene + diphosphate. The enzyme catalyses (2E,6E)-farnesyl diphosphate = beta-himachalene + diphosphate. The catalysed reaction is (2E,6E)-farnesyl diphosphate = gamma-himachalene + diphosphate. It catalyses the reaction (2E,6E)-farnesyl diphosphate = alpha-himachalene + diphosphate. Its pathway is terpene metabolism; oleoresin biosynthesis. Functionally, involved in defensive oleoresin formation in conifers in response to insect attack or other injury. Involved in 52 sesquiterpene (C15) olefins biosynthesis. The sequence is that of Gamma-humulene synthase (ag5) from Abies grandis (Grand fir).